A 105-amino-acid chain; its full sequence is MPKLVVVTREGEESVIEAETGLSVMEVIRDAGIDELLALCGGCCSCATCHVFVDPAFNGLLPDMSDDENDLLDSSDHRDDRSRLSCQLTMTDELDGLTVTIAPED.

The region spanning 2-105 (PKLVVVTREG…GLTVTIAPED (104 aa)) is the 2Fe-2S ferredoxin-type domain. Residues Cys40, Cys46, Cys49, and Cys86 each contribute to the [2Fe-2S] cluster site.

The protein belongs to the adrenodoxin/putidaredoxin family. In terms of assembly, the chloroacetanilide N-alkylformylase multicomponent enzyme system is composed of an oxygenase component (CndA) and an electron transfer component formed by a ferredoxin reductase (CndC1) and a ferredoxin (CndB1). In vitro, chloroacetanilide N-alkylformylase assays in which CndB1 is substituted for CndB2 demonstrate that the two enzymes possess nearly identical activities. The cofactor is [2Fe-2S] cluster.

Functionally, component of the chloroacetanilide N-alkylformylase multicomponent enzyme system involved in the degradation of chloroacetanilide herbicides (N-alkoxyalkyl-N-chloroacetyl-substituted aniline derivatives). In vitro, functions as an intermediate electron transfer protein. The chain is Chloroacetanilide N-alkylformylase 2, ferredoxin component from Rhizorhabdus wittichii (strain DC-6 / KACC 16600) (Sphingomonas wittichii).